The chain runs to 359 residues: 5-amino-6-(D-ribitylamino)uracil--L-tyrosine 4-hydroxyphenyl transferase (359 aa).

One can recognise a Radical SAM core domain in the interval 45 to 282 (VTYVVNANIN…TYAISRIFFK (238 aa)). Positions 59, 63, and 66 each coordinate [4Fe-4S] cluster.

The protein belongs to the radical SAM superfamily. CofH family. In terms of assembly, consists of two subunits, CofG and CofH. [4Fe-4S] cluster serves as cofactor.

The enzyme catalyses 5-amino-6-(D-ribitylamino)uracil + L-tyrosine + S-adenosyl-L-methionine = 5-amino-5-(4-hydroxybenzyl)-6-(D-ribitylimino)-5,6-dihydrouracil + 2-iminoacetate + 5'-deoxyadenosine + L-methionine + H(+). It participates in cofactor biosynthesis; coenzyme F0 biosynthesis. In terms of biological role, catalyzes the radical-mediated synthesis of 5-amino-5-(4-hydroxybenzyl)-6-(D-ribitylimino)-5,6-dihydrouracil from 5-amino-6-(D-ribitylamino)uracil and L-tyrosine. This Methanococcus maripaludis (strain C5 / ATCC BAA-1333) protein is 5-amino-6-(D-ribitylamino)uracil--L-tyrosine 4-hydroxyphenyl transferase.